The sequence spans 383 residues: MFASRSDLQSRLCWIILKATLYSSWFLGVFPYRFDSRNGQLKRSRFLLFYGLILNFFLLLKMVCSGGQKLGIPEAFARNSVLENTHYTTGMLAVFSCVVIHFLNFWGSTRVQDLANELLVLEYQQFASLNETKCPKFNSFVIQKWLSVIGLLLSYLSIAYGLPGNNFSVEMVLINSLVQFSFNCNIMHYYIGVLLIYRYLWLINGQLLEMVTNLKLDCSVDSSRIRKYLSLYRRLLELKGYMVATYEYHMTLVLTTGLASNFLAIYSWIVLDISMNINFIYLLIFPLFLLVNVWNLWLSIAASDLAENAGKSTQTVLKLFADLEVKDIELERSVNEFALLCGHCQFNFHVCGLFTINYKMGFQMIITSFLYLIYMIQFDFMNL.

At 1–11 (MFASRSDLQSR) the chain is on the cytoplasmic side. A helical transmembrane segment spans residues 12-32 (LCWIILKATLYSSWFLGVFPY). Over 33 to 45 (RFDSRNGQLKRSR) the chain is Extracellular. A helical transmembrane segment spans residues 46 to 66 (FLLFYGLILNFFLLLKMVCSG). At 67–86 (GQKLGIPEAFARNSVLENTH) the chain is on the cytoplasmic side. Residues 87 to 107 (YTTGMLAVFSCVVIHFLNFWG) traverse the membrane as a helical segment. Residues 108-144 (STRVQDLANELLVLEYQQFASLNETKCPKFNSFVIQK) lie on the Extracellular side of the membrane. An N-linked (GlcNAc...) asparagine glycan is attached at Asn-130. A helical membrane pass occupies residues 145–165 (WLSVIGLLLSYLSIAYGLPGN). Residues 166-250 (NFSVEMVLIN…YMVATYEYHM (85 aa)) lie on the Cytoplasmic side of the membrane. Residues 251–271 (TLVLTTGLASNFLAIYSWIVL) traverse the membrane as a helical segment. The Extracellular segment spans residues 272–279 (DISMNINF). The helical transmembrane segment at 280 to 300 (IYLLIFPLFLLVNVWNLWLSI) threads the bilayer. The Cytoplasmic portion of the chain corresponds to 301 to 360 (AASDLAENAGKSTQTVLKLFADLEVKDIELERSVNEFALLCGHCQFNFHVCGLFTINYKM). Residues 361–381 (GFQMIITSFLYLIYMIQFDFM) form a helical membrane-spanning segment. The Extracellular portion of the chain corresponds to 382-383 (NL).

Belongs to the insect chemoreceptor superfamily. Gustatory receptor (GR) family. Gr22e subfamily. Taste bristles in the foreleg and labial palps.

The protein localises to the cell membrane. Functionally, probable gustatory receptor which mediates acceptance or avoidance behavior, depending on its substrates. The protein is Putative gustatory receptor 22c (Gr22c) of Drosophila melanogaster (Fruit fly).